The sequence spans 185 residues: Ribosome-recycling factor (185 aa).

The protein belongs to the RRF family.

It localises to the cytoplasm. Functionally, responsible for the release of ribosomes from messenger RNA at the termination of protein biosynthesis. May increase the efficiency of translation by recycling ribosomes from one round of translation to another. The protein is Ribosome-recycling factor of Carboxydothermus hydrogenoformans (strain ATCC BAA-161 / DSM 6008 / Z-2901).